Here is a 334-residue protein sequence, read N- to C-terminus: Trans-1,2-dihydrobenzene-1,2-diol dehydrogenase (334 aa).

This sequence belongs to the Gfo/Idh/MocA family. Homodimer. Small intestine.

The enzyme catalyses (1R,2R)-1,2-dihydrobenzene-1,2-diol + NADP(+) = catechol + NADPH + H(+). The catalysed reaction is D-xylose + NADP(+) = D-xylono-1,5-lactone + NADPH + H(+). The sequence is that of Trans-1,2-dihydrobenzene-1,2-diol dehydrogenase (DHDH) from Homo sapiens (Human).